A 283-amino-acid polypeptide reads, in one-letter code: Small ribosomal subunit protein uS2B (283 aa).

The tract at residues 254–283 (GQVGQSAWDEEGDWNTTGAAQTSDWANTVA) is disordered. Residues 267-283 (WNTTGAAQTSDWANTVA) show a composition bias toward polar residues.

This sequence belongs to the universal ribosomal protein uS2 family. Component of the small ribosomal subunit. Mature ribosomes consist of a small (40S) and a large (60S) subunit. The 40S subunit contains about 33 different proteins and 1 molecule of RNA (18S). The 60S subunit contains about 49 different proteins and 3 molecules of RNA (25S, 5.8S and 5S). Interacts with rps21.

It localises to the cytoplasm. Functionally, required for the assembly and/or stability of the 40S ribosomal subunit. Required for the processing of the 20S rRNA-precursor to mature 18S rRNA in a late step of the maturation of 40S ribosomal subunits. This chain is Small ribosomal subunit protein uS2B (rps0b), found in Schizosaccharomyces japonicus (strain yFS275 / FY16936) (Fission yeast).